We begin with the raw amino-acid sequence, 167 residues long: Large ribosomal subunit protein uL22 (167 aa).

Positions 120 to 167 (GSTATTVEDEAPKAKGAKGAKAKKAPAKKAAAKKAPAKKFAGKKTAKR) are disordered. The segment covering 134–167 (KGAKGAKAKKAPAKKAAAKKAPAKKFAGKKTAKR) has biased composition (basic residues).

This sequence belongs to the universal ribosomal protein uL22 family. Part of the 50S ribosomal subunit.

Functionally, this protein binds specifically to 23S rRNA; its binding is stimulated by other ribosomal proteins, e.g. L4, L17, and L20. It is important during the early stages of 50S assembly. It makes multiple contacts with different domains of the 23S rRNA in the assembled 50S subunit and ribosome. In terms of biological role, the globular domain of the protein is located near the polypeptide exit tunnel on the outside of the subunit, while an extended beta-hairpin is found that lines the wall of the exit tunnel in the center of the 70S ribosome. The protein is Large ribosomal subunit protein uL22 of Koribacter versatilis (strain Ellin345).